We begin with the raw amino-acid sequence, 312 residues long: Taste receptor type 2 member 103 (312 aa).

Topologically, residues 1–16 (MVVTMRAALRLMLIST) are extracellular. Residues 17-37 (VSLELIIGILANVFIALVNII) form a helical membrane-spanning segment. At 38–65 (DWIKRGKISAVDKIYMGLAISRTAFVLS) the chain is on the cytoplasmic side. Residues 66 to 86 (VITGFLIAFLDPASLGIGIMI) form a helical membrane-spanning segment. The Extracellular portion of the chain corresponds to 87 to 92 (RLLTMS). A helical membrane pass occupies residues 93 to 113 (WTVTNHFSVWFATCLSIFYFL). Over 114 to 133 (KITNFSNTVFLALKWKVKKV) the chain is Cytoplasmic. The chain crosses the membrane as a helical span at residues 134–154 (VSVTLVVSLIILFINVIVIHI). Residues 155–184 (YTDRFQVNMVQKCGANNTLRAYGLFLSIST) are Extracellular-facing. N-linked (GlcNAc...) asparagine glycosylation is present at Asn170. Residues 185-205 (VFTFIPFTASLTMFLLLIFSL) form a helical membrane-spanning segment. At 206–229 (WRHLKTMHHNATGSRDVSTVAHIK) the chain is on the cytoplasmic side. A helical membrane pass occupies residues 230–250 (GLQTVVAFLLLYTVFAMSLFS). Residues 251–264 (QSLSIDAQHTNLLS) lie on the Extracellular side of the membrane. The chain crosses the membrane as a helical span at residues 265–285 (HFLRCIGVAFPSGHSCALILG). The Cytoplasmic portion of the chain corresponds to 286–312 (NNKLRQASLSVIFWLRCKYKHTENQGP).

Belongs to the G-protein coupled receptor T2R family.

The protein localises to the membrane. Gustducin-coupled receptor implicated in the perception of bitter compounds in the oral cavity and the gastrointestinal tract. Signals through PLCB2 and the calcium-regulated cation channel TRPM5. This Rattus norvegicus (Rat) protein is Taste receptor type 2 member 103.